The following is a 74-amino-acid chain: Translation initiation factor IF-1 (74 aa).

The S1-like domain occupies 1-72 (MSKEDAIEVE…NKGRITYRLK (72 aa)).

This sequence belongs to the IF-1 family. In terms of assembly, component of the 30S ribosomal translation pre-initiation complex which assembles on the 30S ribosome in the order IF-2 and IF-3, IF-1 and N-formylmethionyl-tRNA(fMet); mRNA recruitment can occur at any time during PIC assembly.

The protein localises to the cytoplasm. One of the essential components for the initiation of protein synthesis. Stabilizes the binding of IF-2 and IF-3 on the 30S subunit to which N-formylmethionyl-tRNA(fMet) subsequently binds. Helps modulate mRNA selection, yielding the 30S pre-initiation complex (PIC). Upon addition of the 50S ribosomal subunit IF-1, IF-2 and IF-3 are released leaving the mature 70S translation initiation complex. In Synechococcus sp. (strain JA-3-3Ab) (Cyanobacteria bacterium Yellowstone A-Prime), this protein is Translation initiation factor IF-1.